Consider the following 214-residue polypeptide: RNA pyrophosphohydrolase (214 aa).

The Nudix hydrolase domain maps to 6–149 (GFRPNVGIIL…KRDVYQLALT (144 aa)). A Nudix box motif is present at residues 38–59 (GGIKYGETPMQAMYRELHEETG).

Belongs to the Nudix hydrolase family. RppH subfamily. Requires a divalent metal cation as cofactor.

In terms of biological role, accelerates the degradation of transcripts by removing pyrophosphate from the 5'-end of triphosphorylated RNA, leading to a more labile monophosphorylated state that can stimulate subsequent ribonuclease cleavage. This is RNA pyrophosphohydrolase from Burkholderia orbicola (strain MC0-3).